Here is a 149-residue protein sequence, read N- to C-terminus: MKKEKRQRLIKQFVKEYEIEKQERLVELLAKKDVLVTQATVSRDIRELNLTKVPSQEGLMIYKIFSEEHLQTDIKLKKKLREVVVKIDCVEQLMVIKTLPGNAHVIGVLFDELDWKEKIGCICGNDTCLIISQSKSDREILEERLNLII.

The protein belongs to the ArgR family.

The protein localises to the cytoplasm. It functions in the pathway amino-acid degradation; L-arginine degradation via ADI pathway. In terms of biological role, regulates the transcription of the arc operon, involved in arginine catabolism. This Bacillus thuringiensis subsp. konkukian (strain 97-27) protein is Arginine regulator (argR1).